A 234-amino-acid chain; its full sequence is ATP-dependent dethiobiotin synthetase BioD (234 aa).

ATP is bound at residue 12–17 (DVGKTF). Residue Thr-16 participates in Mg(2+) binding. Residue Lys-37 is part of the active site. Ser-41 contributes to the substrate binding site. Residues Asp-52, 118-121 (EGAG), and 178-179 (SQ) contribute to the ATP site. Residues Asp-52 and Glu-118 each coordinate Mg(2+).

The protein belongs to the dethiobiotin synthetase family. As to quaternary structure, homodimer. It depends on Mg(2+) as a cofactor.

It localises to the cytoplasm. The catalysed reaction is (7R,8S)-7,8-diammoniononanoate + CO2 + ATP = (4R,5S)-dethiobiotin + ADP + phosphate + 3 H(+). Its pathway is cofactor biosynthesis; biotin biosynthesis; biotin from 7,8-diaminononanoate: step 1/2. Functionally, catalyzes a mechanistically unusual reaction, the ATP-dependent insertion of CO2 between the N7 and N8 nitrogen atoms of 7,8-diaminopelargonic acid (DAPA, also called 7,8-diammoniononanoate) to form a ureido ring. This chain is ATP-dependent dethiobiotin synthetase BioD, found in Phenylobacterium zucineum (strain HLK1).